The primary structure comprises 434 residues: Probable G-protein coupled receptor 150 (434 aa).

At 1 to 3 (MED) the chain is on the extracellular side. A helical membrane pass occupies residues 4 to 24 (LFSPSILPPAPNISVPILLGW). The Cytoplasmic segment spans residues 25 to 43 (GLNLTLGQGAPASGPPSRR). Residues 44-64 (VRLVFLGVILVVAVAGNTTVL) traverse the membrane as a helical segment. Residues 65-81 (CRLCGGGGPWAGPKRRK) lie on the Extracellular side of the membrane. A helical transmembrane segment spans residues 82–102 (MDFLLVQLALADLYACGGTAL). At 103 to 162 (SQLAWELLGEPRAATGDLACRFLQLLQASGRGASAHLVVLIALERRRAVRLPHGRPLPAR) the chain is on the cytoplasmic side. The helical transmembrane segment at 163–183 (ALAALGWLLALLLALPPAFVV) threads the bilayer. Topologically, residues 184–237 (RGDSPSPLPPPPPPTSLQPGAPPAARAWPGERRCHGIFAPLPRWHLQVYAFYEA) are extracellular. Residues 188–210 (PSPLPPPPPPTSLQPGAPPAARA) are disordered. Residues 189–205 (SPLPPPPPPTSLQPGAP) are compositionally biased toward pro residues. The chain crosses the membrane as a helical span at residues 238-258 (VAGFVAPVTVLGVACGHLLSV). Over 259-293 (WWRHRPQAPAAAAPWSASPGRAPAPSALPRAKVQS) the chain is Cytoplasmic. A helical transmembrane segment spans residues 294–314 (LKMSLLLALLFVGCELPYFAA). The Extracellular portion of the chain corresponds to 315-334 (RLAAAWSSGPAGDWEGEGLS). A helical transmembrane segment spans residues 335–355 (AALRVVAMANSALNPFVYLFF). At 356–434 (QAGDCRLRRQ…PLPCSCESAF (79 aa)) the chain is on the cytoplasmic side. Residues 398–407 (WPHPHYHHAR) show a composition bias toward basic residues. The segment at 398 to 434 (WPHPHYHHARREPLDEGGLRPPPPRPRPLPCSCESAF) is disordered. A compositionally biased stretch (pro residues) spans 417-426 (RPPPPRPRPL).

Belongs to the G-protein coupled receptor 1 family.

It localises to the cell membrane. Its function is as follows. Orphan receptor. The chain is Probable G-protein coupled receptor 150 (GPR150) from Homo sapiens (Human).